A 185-amino-acid chain; its full sequence is MQRILMAPGQSCCALAILLAIVNFQHGGCIHVTSSASQKGGRLDLTCTLWHKKDEAEGLILFWCKDNPWNCSPETNLEQLRVKRDPETDGITEKSSQLVFTIEQATPSDSGTYQCCARSQKPEIYIHGHFLSVLVTGNHTEIRQRQRSHPDFSHINGTLSSGFLQVKAWGMLVTSLVALQALYTL.

The signal sequence occupies residues Met-1–Gly-27. Residues Gly-28 to Thr-136 enclose the Ig-like V-type domain. 2 disulfide bridges follow: Cys-47/Cys-115 and Cys-64/Cys-71. Residues Asn-138 and Asn-156 are each glycosylated (N-linked (GlcNAc...) asparagine). Residue Ser-160 is the site of GPI-anchor amidated serine attachment. A propeptide spans Ser-161–Leu-185 (removed in mature form).

As to quaternary structure, homomultimer; disulfide-linked. Interacts with classical and non-classical MHC class I molecules. Interacts with TNFRSF14 (via cysteine-rich domain 1); this interaction is direct. Interacts with LCK and CD247/CD3 zeta chain. Expressed in resting and activated NK cell subsets (at protein level). Expressed in resting NKT cells (at protein level). Expressed in activated CD8+ T cells (at protein level). Highly expressed in intraepithelial lymphocyte (IEL) subsets, particularly in innate-like CD8A-positive IELs (at protein level).

The protein localises to the cell membrane. The protein resides in the secreted. Functionally, receptor on immune cells capable to deliver stimulatory or inhibitory signals that regulate cell activation and differentiation. Exists as a GPI-anchored and as a transmembrane form, each likely initiating distinct signaling pathways via phosphoinositol 3-kinase in activated NK cells and via LCK and CD247/CD3 zeta chain in activated T cells. Receptor for both classical and non-classical MHC class I molecules. Receptor or ligand for TNF superfamily member TNFRSF14, participating in bidirectional cell-cell contact signaling between antigen presenting cells and lymphocytes. Upon ligation of TNFRSF14, provides stimulatory signal to NK cells enhancing IFNG production and anti-tumor immune response. On activated CD4+ T cells, interacts with TNFRSF14 and down-regulates CD28 costimulatory signaling, restricting memory and alloantigen-specific immune response. In the context of bacterial infection, acts as a ligand for TNFRSF14 on epithelial cells, triggering the production of antimicrobial proteins and pro-inflammatory cytokines. In terms of biological role, the soluble GPI-cleaved form, usually released by activated lymphocytes, might play an immune regulatory role by limiting lymphocyte effector functions. The sequence is that of CD160 antigen from Mus musculus (Mouse).